Reading from the N-terminus, the 66-residue chain is Large ribosomal subunit protein bL33c (66 aa).

Belongs to the bacterial ribosomal protein bL33 family.

The protein resides in the plastid. It localises to the chloroplast. The sequence is that of Large ribosomal subunit protein bL33c from Arabis hirsuta (Hairy rock-cress).